A 744-amino-acid polypeptide reads, in one-letter code: Integrator complex subunit 11 homolog (744 aa).

Residues His-67, His-69, Asp-71, His-72, His-156, and Asp-177 each coordinate Zn(2+). Residues 67 to 72 carry the HXHXDH motif motif; it reads HFHLDH. Glu-202 is a catalytic residue. Residue His-425 participates in Zn(2+) binding. The segment at 626-669 is disordered; it reads NNNTSDDNNNNNNNNNNNNNNNNNNNNNNNNNNNNNNNNNNNNN.

It belongs to the metallo-beta-lactamase superfamily. RNA-metabolizing metallo-beta-lactamase-like family. INTS11 subfamily. As to quaternary structure, component of the Integrator complex. The core complex associates with protein phosphatase 2A subunits, to form the Integrator-PP2A (INTAC) complex. Requires Zn(2+) as cofactor.

It is found in the nucleus. The protein resides in the cytoplasm. Functionally, RNA endonuclease component of the integrator complex, a multiprotein complex that terminates RNA polymerase II (Pol II) transcription in the promoter-proximal region of genes. The integrator complex provides a quality checkpoint during transcription elongation by driving premature transcription termination of transcripts that are unfavorably configured for transcriptional elongation: the complex terminates transcription by (1) catalyzing dephosphorylation of the C-terminal domain (CTD) of Pol II subunit polr2a, (2) degrading the exiting nascent RNA transcript via endonuclease activity and (3) promoting the release of Pol II from bound DNA. The integrator complex is also involved in terminating the synthesis of non-coding Pol II transcripts, such as enhancer RNAs (eRNAs), small nuclear RNAs (snRNAs), telomerase RNAs and long non-coding RNAs (lncRNAs). Within the integrator complex, INTS11 constitutes the RNA endonuclease subunit that degrades exiting nascent RNA transcripts. In Dictyostelium discoideum (Social amoeba), this protein is Integrator complex subunit 11 homolog (ints11).